A 497-amino-acid polypeptide reads, in one-letter code: Cytoplasmic dynein 1 light intermediate chain 2 (497 aa).

61–68 lines the ATP pocket; the sequence is GEDGSGKT. Disordered regions lie at residues 187–206, 366–408, 423–461, and 474–497; these read PEEG…SGSD, QQES…IKNN, LSKK…TEQC, and QEEL…ENEA. Ser-194, Ser-369, and Ser-377 each carry phosphoserine. An Omega-N-methylarginine modification is found at Arg-383. Residues 423–444 are compositionally biased toward polar residues; sequence LSKKTGSPGSPSAGGVQSTAKK. Thr-427 is modified (phosphothreonine). Phosphoserine occurs at positions 429 and 432. Positions 476-485 are enriched in basic and acidic residues; it reads ELDRMTRKPD. Positions 487–497 are enriched in polar residues; the sequence is MVTNSSTENEA.

Belongs to the dynein light intermediate chain family. In terms of assembly, homodimer. The cytoplasmic dynein 1 complex consists of two catalytic heavy chains (HCs) and a number of non-catalytic subunits presented by intermediate chains (ICs), light intermediate chains (LICs) and light chains (LCs); the composition seems to vary in respect to the IC, LIC and LC composition. The heavy chain homodimer serves as a scaffold for the probable homodimeric assembly of the respective non-catalytic subunits. The ICs and LICs bind directly to the HC dimer and the LCs assemble on the IC dimer. Self-associates. Interacts with DYNC1H1; DYNC1LI1 and DYNC1LI2 bind mutually exclusive to DYNC1H1. Ubiquitous.

The protein localises to the cytoplasm. It is found in the cytoskeleton. Functionally, acts as one of several non-catalytic accessory components of the cytoplasmic dynein 1 complex that are thought to be involved in linking dynein to cargos and to adapter proteins that regulate dynein function. Cytoplasmic dynein 1 acts as a motor for the intracellular retrograde motility of vesicles and organelles along microtubules. May play a role in binding dynein to membranous organelles or chromosomes. This is Cytoplasmic dynein 1 light intermediate chain 2 (Dync1li2) from Rattus norvegicus (Rat).